The following is a 145-amino-acid chain: Large ribosomal subunit protein bL17 (145 aa).

This sequence belongs to the bacterial ribosomal protein bL17 family. Part of the 50S ribosomal subunit. Contacts protein L32.

The polypeptide is Large ribosomal subunit protein bL17 (Orientia tsutsugamushi (strain Boryong) (Rickettsia tsutsugamushi)).